Consider the following 102-residue polypeptide: NADH-quinone oxidoreductase subunit K (102 aa).

The next 3 helical transmembrane spans lie at 5-25, 31-51, and 66-86; these read IAHY…GIFL, IIIL…FIAF, and FVLT…VVFF.

This sequence belongs to the complex I subunit 4L family. NDH-1 is composed of 14 different subunits. Subunits NuoA, H, J, K, L, M, N constitute the membrane sector of the complex.

It localises to the cell inner membrane. It catalyses the reaction a quinone + NADH + 5 H(+)(in) = a quinol + NAD(+) + 4 H(+)(out). In terms of biological role, NDH-1 shuttles electrons from NADH, via FMN and iron-sulfur (Fe-S) centers, to quinones in the respiratory chain. The immediate electron acceptor for the enzyme in this species is believed to be ubiquinone. Couples the redox reaction to proton translocation (for every two electrons transferred, four hydrogen ions are translocated across the cytoplasmic membrane), and thus conserves the redox energy in a proton gradient. This Chelativorans sp. (strain BNC1) protein is NADH-quinone oxidoreductase subunit K.